The sequence spans 266 residues: Small ribosomal subunit protein mS42 (266 aa).

It belongs to the mitochondrion-specific ribosomal protein mS42 family. Component of the mitochondrial small ribosomal subunit (mt-SSU). Mature yeast 74S mitochondrial ribosomes consist of a small (37S) and a large (54S) subunit. The 37S small subunit contains a 15S ribosomal RNA (15S mt-rRNA) and 34 different proteins. The 54S large subunit contains a 21S rRNA (21S mt-rRNA) and 46 different proteins. mS42 forms a heterodimer with mS43, building a large protuberance adjacent to the mRNA channel exit in the mt-SSU body.

Its subcellular location is the mitochondrion. Component of the mitochondrial ribosome (mitoribosome), a dedicated translation machinery responsible for the synthesis of mitochondrial genome-encoded proteins, including at least some of the essential transmembrane subunits of the mitochondrial respiratory chain. The mitoribosomes are attached to the mitochondrial inner membrane and translation products are cotranslationally integrated into the membrane. This chain is Small ribosomal subunit protein mS42 (RSM26), found in Saccharomyces cerevisiae (strain ATCC 204508 / S288c) (Baker's yeast).